Here is a 184-residue protein sequence, read N- to C-terminus: Adenine phosphoribosyltransferase (184 aa).

It belongs to the purine/pyrimidine phosphoribosyltransferase family. As to quaternary structure, homodimer.

Its subcellular location is the cytoplasm. The catalysed reaction is AMP + diphosphate = 5-phospho-alpha-D-ribose 1-diphosphate + adenine. Its pathway is purine metabolism; AMP biosynthesis via salvage pathway; AMP from adenine: step 1/1. Catalyzes a salvage reaction resulting in the formation of AMP, that is energically less costly than de novo synthesis. The chain is Adenine phosphoribosyltransferase from Corynebacterium diphtheriae (strain ATCC 700971 / NCTC 13129 / Biotype gravis).